A 292-amino-acid polypeptide reads, in one-letter code: Elongation factor Ts (292 aa).

Residues 81 to 84 (TDFV) form an involved in Mg(2+) ion dislocation from EF-Tu region.

This sequence belongs to the EF-Ts family.

It localises to the cytoplasm. Its function is as follows. Associates with the EF-Tu.GDP complex and induces the exchange of GDP to GTP. It remains bound to the aminoacyl-tRNA.EF-Tu.GTP complex up to the GTP hydrolysis stage on the ribosome. This Acidithiobacillus ferrooxidans (strain ATCC 23270 / DSM 14882 / CIP 104768 / NCIMB 8455) (Ferrobacillus ferrooxidans (strain ATCC 23270)) protein is Elongation factor Ts.